The sequence spans 240 residues: Putative tyrosine phosphatase 067L (240 aa).

The Tyrosine-protein phosphatase domain maps to 3–151 (QASFFVADKA…EREWPLNPTQ (149 aa)). Cys96 acts as the Phosphocysteine intermediate in catalysis.

It belongs to the protein-tyrosine phosphatase family.

It carries out the reaction O-phospho-L-tyrosyl-[protein] + H2O = L-tyrosyl-[protein] + phosphate. The polypeptide is Putative tyrosine phosphatase 067L (Aedes vexans (Inland floodwater mosquito)).